Consider the following 154-residue polypeptide: Superoxide dismutase [Cu-Zn] (154 aa).

Residues H47, H49, and H64 each coordinate Cu cation. Residues C58 and C147 are joined by a disulfide bond. Zn(2+) contacts are provided by H64, H72, H81, and D84. Residue H121 participates in Cu cation binding.

This sequence belongs to the Cu-Zn superoxide dismutase family. In terms of assembly, homodimer. It depends on Cu cation as a cofactor. The cofactor is Zn(2+).

It is found in the cytoplasm. It carries out the reaction 2 superoxide + 2 H(+) = H2O2 + O2. Destroys radicals which are normally produced within the cells and which are toxic to biological systems. This is Superoxide dismutase [Cu-Zn] (SODCC) from Pinus sylvestris (Scotch pine).